The primary structure comprises 463 residues: Methionine aminopeptidase 2-1 (463 aa).

A disordered region spans residues 1-98; that stretch reads MGSKTPEEQI…PPRVPLSDLF (98 aa). A compositionally biased stretch (basic and acidic residues) spans 30-45; it reads RGTHLSRDGDGSLGDH. Positions 46–55 are enriched in acidic residues; sequence GDDDDADEDD. Basic residues predominate over residues 69–81; the sequence is KKKKRPKKKKKPA. Histidine 214 serves as a coordination point for substrate. Residues aspartate 235, aspartate 246, and histidine 315 each coordinate a divalent metal cation. Substrate is bound at residue histidine 323. A divalent metal cation is bound by residues glutamate 348 and glutamate 444.

The protein belongs to the peptidase M24A family. Methionine aminopeptidase eukaryotic type 2 subfamily. Co(2+) serves as cofactor. It depends on Zn(2+) as a cofactor. The cofactor is Mn(2+). Fe(2+) is required as a cofactor.

The protein localises to the cytoplasm. It carries out the reaction Release of N-terminal amino acids, preferentially methionine, from peptides and arylamides.. In terms of biological role, cotranslationally removes the N-terminal methionine from nascent proteins. The N-terminal methionine is often cleaved when the second residue in the primary sequence is small and uncharged (Met-Ala-, Cys, Gly, Pro, Ser, Thr, or Val). This chain is Methionine aminopeptidase 2-1, found in Colletotrichum graminicola (strain M1.001 / M2 / FGSC 10212) (Maize anthracnose fungus).